Reading from the N-terminus, the 340-residue chain is Phosphate acyltransferase (340 aa).

This sequence belongs to the PlsX family. As to quaternary structure, homodimer. Probably interacts with PlsY.

It localises to the cytoplasm. It carries out the reaction a fatty acyl-[ACP] + phosphate = an acyl phosphate + holo-[ACP]. It participates in lipid metabolism; phospholipid metabolism. Functionally, catalyzes the reversible formation of acyl-phosphate (acyl-PO(4)) from acyl-[acyl-carrier-protein] (acyl-ACP). This enzyme utilizes acyl-ACP as fatty acyl donor, but not acyl-CoA. The polypeptide is Phosphate acyltransferase (Marinobacter nauticus (strain ATCC 700491 / DSM 11845 / VT8) (Marinobacter aquaeolei)).